Consider the following 91-residue polypeptide: Probable Fe(2+)-trafficking protein (91 aa).

The protein belongs to the Fe(2+)-trafficking protein family.

Could be a mediator in iron transactions between iron acquisition and iron-requiring processes, such as synthesis and/or repair of Fe-S clusters in biosynthetic enzymes. This is Probable Fe(2+)-trafficking protein from Burkholderia cenocepacia (strain ATCC BAA-245 / DSM 16553 / LMG 16656 / NCTC 13227 / J2315 / CF5610) (Burkholderia cepacia (strain J2315)).